Consider the following 281-residue polypeptide: Octanoyl-[GcvH]:protein N-octanoyltransferase (281 aa).

Residues glycine 44–threonine 250 form the BPL/LPL catalytic domain. The active-site Acyl-thioester intermediate is cysteine 149.

Belongs to the octanoyltransferase LipL family.

The enzyme catalyses N(6)-octanoyl-L-lysyl-[glycine-cleavage complex H protein] + L-lysyl-[lipoyl-carrier protein] = N(6)-octanoyl-L-lysyl-[lipoyl-carrier protein] + L-lysyl-[glycine-cleavage complex H protein]. It functions in the pathway protein modification; protein lipoylation via endogenous pathway; protein N(6)-(lipoyl)lysine from octanoyl-[acyl-carrier-protein]. Catalyzes the amidotransfer (transamidation) of the octanoyl moiety from octanoyl-GcvH to the lipoyl domain of the E2 subunit of lipoate-dependent enzymes. This chain is Octanoyl-[GcvH]:protein N-octanoyltransferase, found in Bacillus anthracis.